Consider the following 143-residue polypeptide: Large ribosomal subunit protein uL11 (143 aa).

Belongs to the universal ribosomal protein uL11 family. As to quaternary structure, part of the ribosomal stalk of the 50S ribosomal subunit. Interacts with L10 and the large rRNA to form the base of the stalk. L10 forms an elongated spine to which L12 dimers bind in a sequential fashion forming a multimeric L10(L12)X complex. In terms of processing, one or more lysine residues are methylated.

In terms of biological role, forms part of the ribosomal stalk which helps the ribosome interact with GTP-bound translation factors. The sequence is that of Large ribosomal subunit protein uL11 from Nitrosospira multiformis (strain ATCC 25196 / NCIMB 11849 / C 71).